Here is a 167-residue protein sequence, read N- to C-terminus: Large ribosomal subunit protein uL10 (167 aa).

This sequence belongs to the universal ribosomal protein uL10 family. Part of the ribosomal stalk of the 50S ribosomal subunit. The N-terminus interacts with L11 and the large rRNA to form the base of the stalk. The C-terminus forms an elongated spine to which L12 dimers bind in a sequential fashion forming a multimeric L10(L12)X complex.

Forms part of the ribosomal stalk, playing a central role in the interaction of the ribosome with GTP-bound translation factors. This chain is Large ribosomal subunit protein uL10, found in Chromohalobacter salexigens (strain ATCC BAA-138 / DSM 3043 / CIP 106854 / NCIMB 13768 / 1H11).